The primary structure comprises 88 residues: Apolipoprotein C-I (88 aa).

A signal peptide spans 1-26 (MRLILSLPVLAVVLAMVLEGPAPAQA).

Belongs to the apolipoprotein C1 family.

Its subcellular location is the secreted. Its function is as follows. Inhibitor of lipoprotein binding to the low density lipoprotein (LDL) receptor, LDL receptor-related protein, and very low density lipoprotein (VLDL) receptor. Associates with high density lipoproteins (HDL) and the triacylglycerol-rich lipoproteins in the plasma and makes up about 10% of the protein of the VLDL and 2% of that of HDL. Appears to interfere directly with fatty acid uptake and is also the major plasma inhibitor of cholesteryl ester transfer protein (CETP). Binds free fatty acids and reduces their intracellular esterification. Modulates the interaction of APOE with beta-migrating VLDL and inhibits binding of beta-VLDL to the LDL receptor-related protein. The polypeptide is Apolipoprotein C-I (APOC1) (Eidolon helvum (Straw-colored fruit bat)).